The chain runs to 95 residues: uncharacterized protein (95 aa).

This is an uncharacterized protein from Caenorhabditis elegans.